The chain runs to 338 residues: 1-aminocyclopropane-1-carboxylate deaminase (338 aa).

Lys51 is subject to N6-(pyridoxal phosphate)lysine. Catalysis depends on Ser78, which acts as the Nucleophile.

It belongs to the ACC deaminase/D-cysteine desulfhydrase family. Homotrimer. Pyridoxal 5'-phosphate is required as a cofactor.

The enzyme catalyses 1-aminocyclopropane-1-carboxylate + H2O = 2-oxobutanoate + NH4(+). Catalyzes a cyclopropane ring-opening reaction, the irreversible conversion of 1-aminocyclopropane-1-carboxylate (ACC) to ammonia and alpha-ketobutyrate. Allows growth on ACC as a nitrogen source. The sequence is that of 1-aminocyclopropane-1-carboxylate deaminase from Burkholderia lata (strain ATCC 17760 / DSM 23089 / LMG 22485 / NCIMB 9086 / R18194 / 383).